The sequence spans 890 residues: DNA mismatch repair protein MutS (890 aa).

607–614 (GPNMSGKS) contributes to the ATP binding site.

Belongs to the DNA mismatch repair MutS family.

Functionally, this protein is involved in the repair of mismatches in DNA. It is possible that it carries out the mismatch recognition step. This protein has a weak ATPase activity. In Bacillus thuringiensis (strain Al Hakam), this protein is DNA mismatch repair protein MutS.